The sequence spans 728 residues: Magnetosome formation protease MamE (728 aa).

Over 1–21 (MAMFNGDVEDGGRGDASCGKD) the chain is Cytoplasmic. A helical transmembrane segment spans residues 22-42 (LKRYLMLMGVVALVVLFGAFI). Topologically, residues 43–728 (YRQSSGGLRL…RNGQEFWIVL (686 aa)) are lumenal. Residues His-188, Asp-221, and Ser-297 each act as charge relay system in the active site. Positions 375-398 (IFAGTRAPHTDGRQNMDCTTCHDL) match the MCR (magnetochrome) 1 motif. 6 residues coordinate heme: Cys-392, Cys-395, His-396, Cys-438, Cys-441, and His-442. Residues 421–444 (IPMGAVSPHTDGRQNMNCANCHQM) carry the MCR 2 motif. 2 consecutive PDZ domains span residues 471–573 (AINI…LRDG) and 622–721 (PAVM…NRNG).

In the N-terminal section; belongs to the peptidase S1C family. As to quaternary structure, might interact with MamB via PDZ1. Heme serves as cofactor. Post-translationally, subject to autocatalytic cleavage; cleavage also requires MamO.

It is found in the magnetosome membrane. With respect to regulation, autoproteolysis is stimulated by exogenous substrates or peptides that bind to its PDZ domains; may be stimulated by an environmental cue in vivo. Protease activity is tightly regulated; increasing its activity decreases substrate levels and disturbs biomineralization. Acts at 2 distinct steps of magnetosome formation; required for correct localization of proteins to the magnetosome while the protease activity is required for maturation of small magnetite crystals into larger, functional ones. The 2 functions are separable by mutation. Probably cleaves at least itself, MamO and MamP; cleavage requires the putative transport domain of MamO. Involved in localization of some proteins (at least MamA, MamC, MamF, MamI and MamJ) to the magnetosome. This is Magnetosome formation protease MamE (mamE) from Paramagnetospirillum magneticum (strain ATCC 700264 / AMB-1) (Magnetospirillum magneticum).